The primary structure comprises 542 residues: MGNKIHAGFTFTPSHARSLDCFVCLLVLFSFRSTPPHGRHPAIEPTLLISHYYRGQMLGTYNGDSKAETDGKDNSICHICSDVATGRHYGAIACNGCKGFFRRTVRRNYEYHCRFESKCEIDKHNRAVCRYCRFMKCISSGMRDDQVQSERDVIGKREKKDNMKTYCQDPTPRTSPELTMSPVEDEYDQLLESLLKSEMTIQSLRDTVITQTGNVEYTTKSKNRLSHTDRTATLNDVLKSMHSQLLLVIEWAKTLPEFKQLSGADQAVLLKNFAGQHVTLCVAYRSVGANDALKLLNDLYIPRASKTTPHLKEYVDGFYLRDCEKVMDQLVEPMRFLKLDNKEFVALKACVLFNPVAPGLSNHAVNLVLNARRKIFAAFEKYVRVNKPLETTRVGDLTFFILTPLSVLSKSISEDIMFTKVSGVARIDVLMEELILAETDYGEDRQDQTPCSIMNDTPSGSQDMCSPCPEDLLRTSTSSNSPTNSSLTAGLLLKTDDAMMSGIGTQYTTPQPHTPQFADSSHLNLPYAPFTSSYNQYPNTYS.

The segment at residues 74-149 (NSICHICSDV…SGMRDDQVQS (76 aa)) is a DNA-binding region (nuclear receptor). NR C4-type zinc fingers lie at residues 77 to 97 (CHIC…CNGC) and 113 to 137 (CRFE…FMKC). An NR LBD domain is found at 186–438 (EYDQLLESLL…VLMEELILAE (253 aa)). The tract at residues 445–487 (RQDQTPCSIMNDTPSGSQDMCSPCPEDLLRTSTSSNSPTNSSL) is disordered. The segment covering 448–464 (QTPCSIMNDTPSGSQDM) has biased composition (polar residues). Positions 475-487 (TSTSSNSPTNSSL) are enriched in low complexity.

This sequence belongs to the nuclear hormone receptor family.

It localises to the nucleus. Its function is as follows. Orphan nuclear receptor. This is Nuclear hormone receptor family member nhr-35 (nhr-35) from Caenorhabditis elegans.